Here is a 421-residue protein sequence, read N- to C-terminus: Glucose-1-phosphate adenylyltransferase (421 aa).

Residues tyrosine 109, glycine 175, 190 to 191 (EK), and serine 208 each bind alpha-D-glucose 1-phosphate.

The protein belongs to the bacterial/plant glucose-1-phosphate adenylyltransferase family. As to quaternary structure, homotetramer.

It carries out the reaction alpha-D-glucose 1-phosphate + ATP + H(+) = ADP-alpha-D-glucose + diphosphate. Its pathway is glycan biosynthesis; glycogen biosynthesis. Involved in the biosynthesis of ADP-glucose, a building block required for the elongation reactions to produce glycogen. Catalyzes the reaction between ATP and alpha-D-glucose 1-phosphate (G1P) to produce pyrophosphate and ADP-Glc. This chain is Glucose-1-phosphate adenylyltransferase, found in Teredinibacter turnerae (strain ATCC 39867 / T7901).